A 502-amino-acid chain; its full sequence is ATP synthase subunit beta, chloroplastic (502 aa).

Ser17 is subject to Phosphoserine. 176–183 is a binding site for ATP; it reads GGAGVGKT.

The protein belongs to the ATPase alpha/beta chains family. As to quaternary structure, F-type ATPases have 2 components, CF(1) - the catalytic core - and CF(0) - the membrane proton channel. CF(1) has five subunits: alpha(3), beta(3), gamma(1), delta(1), epsilon(1). CF(0) has four main subunits: a(1), b(1), b'(1) and c(9-12).

The protein resides in the plastid. It localises to the chloroplast thylakoid membrane. The catalysed reaction is ATP + H2O + 4 H(+)(in) = ADP + phosphate + 5 H(+)(out). In terms of biological role, produces ATP from ADP in the presence of a proton gradient across the membrane. The catalytic sites are hosted primarily by the beta subunits. In Lepidium virginicum (Virginia pepperweed), this protein is ATP synthase subunit beta, chloroplastic.